The sequence spans 314 residues: uncharacterized protein (314 aa).

The protein to M.leprae ML0607.

This is an uncharacterized protein from Mycobacterium bovis (strain ATCC BAA-935 / AF2122/97).